Here is a 103-residue protein sequence, read N- to C-terminus: MASRWAVQLLLVAAWSMGCGEALKCYTCKEPMTSASCRTITRCKPEDTACMTTLVTVEAEYPFNQSPVVTRSCSSSCVATDPDSIGAAHLIFCCFRDLCNSEL.

Positions 1–22 (MASRWAVQLLLVAAWSMGCGEA) are cleaved as a signal peptide. Residues 24-73 (KCYTCKEPMTSASCRTITRCKPEDTACMTTLVTVEAEYPFNQSPVVTRSC) form the UPAR/Ly6 domain. Disulfide bonds link Cys25-Cys50, Cys28-Cys37, Cys43-Cys73, Cys77-Cys93, and Cys94-Cys99.

In terms of assembly, homodimer. Interacts with PLAU. Interacts with CHRNA7. In terms of tissue distribution, granulocytes. Expressed in skin. Predominantly expressed in the granular layer of skin, notably the acrosyringium. Identified in several biological fluids such as sweat, saliva, tears, plasma and urine.

The protein resides in the secreted. Has an antitumor activity. Was found to be a marker of late differentiation of the skin. Implicated in maintaining the physiological and structural integrity of the keratinocyte layers of the skin. In vitro down-regulates keratinocyte proliferation; the function may involve the proposed role as modulator of nicotinic acetylcholine receptors (nAChRs) activity. In vitro inhibits alpha-7-dependent nAChR currents in an allosteric manner. In T cells may be involved in regulation of intracellular Ca(2+) signaling. Seems to have an immunomodulatory function in the cornea. The function may implicate a possible role as a scavenger receptor for PLAU thereby blocking PLAU-dependent functions of PLAUR such as in cell migration and proliferation. This Homo sapiens (Human) protein is Secreted Ly-6/uPAR-related protein 1 (SLURP1).